The chain runs to 86 residues: Large ribosomal subunit protein bL27 (86 aa).

The segment covering 1–10 has biased composition (gly residues); it reads MAQKKGGGST. The segment at 1–21 is disordered; the sequence is MAQKKGGGSTRNGRDSESKRL.

The protein belongs to the bacterial ribosomal protein bL27 family.

The chain is Large ribosomal subunit protein bL27 from Cupriavidus pinatubonensis (strain JMP 134 / LMG 1197) (Cupriavidus necator (strain JMP 134)).